The chain runs to 379 residues: Pentatricopeptide repeat-containing protein At3g25210, mitochondrial (379 aa).

PPR repeat units follow at residues 142-177 (SVPL…DDSK), 179-221 (DLET…GVIP), 222-256 (DTFV…GSEP), 257-291 (NAYT…GMVP), 292-326 (NGSC…SLSP), and 327-361 (DMLT…DPVM).

Belongs to the PPR family. P subfamily.

The protein localises to the mitochondrion. The polypeptide is Pentatricopeptide repeat-containing protein At3g25210, mitochondrial (Arabidopsis thaliana (Mouse-ear cress)).